A 225-amino-acid chain; its full sequence is Histone H1.11L (225 aa).

Low complexity-rich tracts occupy residues Met-1 to Ala-23 and Ala-31 to Pro-43. Disordered stretches follow at residues Met-1–Thr-46 and Ser-94–Lys-225. Ser-2 is subject to N-acetylserine. In terms of domain architecture, H15 spans Ala-41–Lys-114. Composition is skewed to basic residues over residues Ala-123 to Ala-138, Lys-146 to Lys-163, Lys-171 to Val-189, and Lys-198 to Lys-225.

Belongs to the histone H1/H5 family.

The protein resides in the nucleus. It is found in the chromosome. Functionally, histones H1 are necessary for the condensation of nucleosome chains into higher-order structures. The chain is Histone H1.11L from Gallus gallus (Chicken).